The following is a 505-amino-acid chain: Glucose-6-phosphate 1-dehydrogenase (505 aa).

An N-acetylserine modification is found at Ser2. NADP(+) contacts are provided by residues 18–25 (GASGDLAK) and Arg52. Ser142 bears the Phosphoserine mark. Residue Tyr145 is modified to Phosphotyrosine. Lys157 is a binding site for NADP(+). Residues Lys157, 187–191 (HYLGK), Glu225, and Asp244 each bind D-glucose 6-phosphate. Catalysis depends on His249, which acts as the Proton acceptor. NADP(+) is bound at residue Arg340. A D-glucose 6-phosphate-binding site is contributed by Lys343. Positions 349, 353, and 375 each coordinate NADP(+). Gln377 is a D-glucose 6-phosphate binding site. NADP(+) contacts are provided by residues 383 to 385 (YLK) and Arg470.

It belongs to the glucose-6-phosphate dehydrogenase family.

The catalysed reaction is D-glucose 6-phosphate + NADP(+) = 6-phospho-D-glucono-1,5-lactone + NADPH + H(+). The protein operates within carbohydrate degradation; pentose phosphate pathway; D-ribulose 5-phosphate from D-glucose 6-phosphate (oxidative stage): step 1/3. Functionally, catalyzes the rate-limiting step of the oxidative pentose-phosphate pathway, which represents a route for the dissimilation of carbohydrates besides glycolysis. The main function of this enzyme is to provide reducing power (NADPH) and pentose phosphates for fatty acid and nucleic acid synthesis. The protein is Glucose-6-phosphate 1-dehydrogenase (ZWF1) of Saccharomyces cerevisiae (strain ATCC 204508 / S288c) (Baker's yeast).